The following is a 330-amino-acid chain: Phosphate acyltransferase (330 aa).

This sequence belongs to the PlsX family. Homodimer. Probably interacts with PlsY.

The protein localises to the cytoplasm. It carries out the reaction a fatty acyl-[ACP] + phosphate = an acyl phosphate + holo-[ACP]. The protein operates within lipid metabolism; phospholipid metabolism. In terms of biological role, catalyzes the reversible formation of acyl-phosphate (acyl-PO(4)) from acyl-[acyl-carrier-protein] (acyl-ACP). This enzyme utilizes acyl-ACP as fatty acyl donor, but not acyl-CoA. This chain is Phosphate acyltransferase, found in Streptococcus pneumoniae (strain 70585).